A 129-amino-acid polypeptide reads, in one-letter code: Small ribosomal subunit protein uS11 (129 aa).

This sequence belongs to the universal ribosomal protein uS11 family. In terms of assembly, part of the 30S ribosomal subunit. Interacts with proteins S7 and S18. Binds to IF-3.

Functionally, located on the platform of the 30S subunit, it bridges several disparate RNA helices of the 16S rRNA. Forms part of the Shine-Dalgarno cleft in the 70S ribosome. The chain is Small ribosomal subunit protein uS11 from Bartonella tribocorum (strain CIP 105476 / IBS 506).